A 340-amino-acid chain; its full sequence is Glyceraldehyde-3-phosphate dehydrogenase, cytosolic (340 aa).

NAD(+)-binding positions include 16-17 (RI), aspartate 38, and arginine 85. Residues 156–158 (SCT), threonine 187, 216–217 (TG), and arginine 239 contribute to the D-glyceraldehyde 3-phosphate site. The active-site Nucleophile is the cysteine 157. Asparagine 321 is an NAD(+) binding site.

The protein belongs to the glyceraldehyde-3-phosphate dehydrogenase family. In terms of assembly, homotetramer.

It localises to the cytoplasm. It catalyses the reaction D-glyceraldehyde 3-phosphate + phosphate + NAD(+) = (2R)-3-phospho-glyceroyl phosphate + NADH + H(+). Its pathway is carbohydrate degradation; glycolysis; pyruvate from D-glyceraldehyde 3-phosphate: step 1/5. Key enzyme in glycolysis that catalyzes the first step of the pathway by converting D-glyceraldehyde 3-phosphate (G3P) into 3-phospho-D-glyceroyl phosphate. Essential for the maintenance of cellular ATP levels and carbohydrate metabolism. This chain is Glyceraldehyde-3-phosphate dehydrogenase, cytosolic, found in Taxus baccata (English yew).